We begin with the raw amino-acid sequence, 507 residues long: ATP synthase subunit alpha, mitochondrial (507 aa).

Residue 171–178 participates in ATP binding; the sequence is GDRQTGKT.

The protein belongs to the ATPase alpha/beta chains family. As to quaternary structure, F-type ATPases have 2 components, CF(1) - the catalytic core - and CF(0) - the membrane proton channel. CF(1) has five subunits: alpha(3), beta(3), gamma(1), delta(1), epsilon(1). CF(0) has three main subunits: a, b and c.

The protein localises to the mitochondrion. It localises to the mitochondrion inner membrane. Functionally, mitochondrial membrane ATP synthase (F(1)F(0) ATP synthase or Complex V) produces ATP from ADP in the presence of a proton gradient across the membrane which is generated by electron transport complexes of the respiratory chain. F-type ATPases consist of two structural domains, F(1) - containing the extramembraneous catalytic core, and F(0) - containing the membrane proton channel, linked together by a central stalk and a peripheral stalk. During catalysis, ATP synthesis in the catalytic domain of F(1) is coupled via a rotary mechanism of the central stalk subunits to proton translocation. Subunits alpha and beta form the catalytic core in F(1). Rotation of the central stalk against the surrounding alpha(3)beta(3) subunits leads to hydrolysis of ATP in three separate catalytic sites on the beta subunits. Subunit alpha does not bear the catalytic high-affinity ATP-binding sites. This is ATP synthase subunit alpha, mitochondrial (ATPA) from Pisum sativum (Garden pea).